The sequence spans 399 residues: uncharacterized protein (399 aa).

A run of 5 helical transmembrane segments spans residues 26–46, 266–286, 301–321, 324–344, and 358–378; these read LLTI…ISLG, VITI…AVGI, IGIL…FVVE, FLGL…AEVI, and AWIS…VGVI.

This sequence belongs to the ABC-4 integral membrane protein family.

It localises to the cell membrane. This is an uncharacterized protein from Methanocaldococcus jannaschii (strain ATCC 43067 / DSM 2661 / JAL-1 / JCM 10045 / NBRC 100440) (Methanococcus jannaschii).